The chain runs to 147 residues: Hemoglobin subunit beta (147 aa).

Residue Val-2 is modified to N-acetylvaline. Residues 3-147 enclose the Globin domain; it reads HLTPEEKNAV…VANALAHKYH (145 aa). Thr-13 is subject to Phosphothreonine. Ser-45 carries the phosphoserine modification. N6-acetyllysine is present on Lys-60. His-64 is a heme b binding site. Lys-83 is modified (N6-acetyllysine). His-93 provides a ligand contact to heme b. Residue Cys-94 is modified to S-nitrosocysteine. Position 145 is an N6-acetyllysine (Lys-145).

The protein belongs to the globin family. As to quaternary structure, heterotetramer of two alpha chains and two beta chains. In terms of tissue distribution, red blood cells.

In terms of biological role, involved in oxygen transport from the lung to the various peripheral tissues. This Papio anubis (Olive baboon) protein is Hemoglobin subunit beta (HBB).